A 594-amino-acid chain; its full sequence is A-type ATP synthase subunit A (594 aa).

ATP is bound at residue 236-243 (GPFGSGKT).

It belongs to the ATPase alpha/beta chains family. As to quaternary structure, has multiple subunits with at least A(3), B(3), C, D, E, F, H, I and proteolipid K(x).

It localises to the cell membrane. It carries out the reaction ATP + H2O + 4 H(+)(in) = ADP + phosphate + 5 H(+)(out). Its function is as follows. Component of the A-type ATP synthase that produces ATP from ADP in the presence of a proton gradient across the membrane. The A chain is the catalytic subunit. This chain is A-type ATP synthase subunit A, found in Pyrobaculum neutrophilum (strain DSM 2338 / JCM 9278 / NBRC 100436 / V24Sta) (Thermoproteus neutrophilus).